Here is a 450-residue protein sequence, read N- to C-terminus: Phosphoglucosamine mutase (450 aa).

The active-site Phosphoserine intermediate is the Ser101. The Mg(2+) site is built by Ser101, Asp240, Asp242, and Asp244. Ser101 carries the phosphoserine modification.

Belongs to the phosphohexose mutase family. Requires Mg(2+) as cofactor. Activated by phosphorylation.

It carries out the reaction alpha-D-glucosamine 1-phosphate = D-glucosamine 6-phosphate. Its function is as follows. Catalyzes the conversion of glucosamine-6-phosphate to glucosamine-1-phosphate. This Streptococcus equi subsp. zooepidemicus (strain H70) protein is Phosphoglucosamine mutase.